We begin with the raw amino-acid sequence, 253 residues long: Small ribosomal subunit protein uS2 (253 aa).

This sequence belongs to the universal ribosomal protein uS2 family.

The chain is Small ribosomal subunit protein uS2 from Chlorobium luteolum (strain DSM 273 / BCRC 81028 / 2530) (Pelodictyon luteolum).